The chain runs to 183 residues: ATP synthase subunit b 2 (183 aa).

A helical membrane pass occupies residues 27–47 (PSFYAFLALLIFFGLLLHMGV).

The protein belongs to the ATPase B chain family. As to quaternary structure, F-type ATPases have 2 components, F(1) - the catalytic core - and F(0) - the membrane proton channel. F(1) has five subunits: alpha(3), beta(3), gamma(1), delta(1), epsilon(1). F(0) has three main subunits: a(1), b(2) and c(10-14). The alpha and beta chains form an alternating ring which encloses part of the gamma chain. F(1) is attached to F(0) by a central stalk formed by the gamma and epsilon chains, while a peripheral stalk is formed by the delta and b chains.

The protein resides in the cell inner membrane. Its function is as follows. F(1)F(0) ATP synthase produces ATP from ADP in the presence of a proton or sodium gradient. F-type ATPases consist of two structural domains, F(1) containing the extramembraneous catalytic core and F(0) containing the membrane proton channel, linked together by a central stalk and a peripheral stalk. During catalysis, ATP synthesis in the catalytic domain of F(1) is coupled via a rotary mechanism of the central stalk subunits to proton translocation. Component of the F(0) channel, it forms part of the peripheral stalk, linking F(1) to F(0). The protein is ATP synthase subunit b 2 of Maricaulis maris (strain MCS10) (Caulobacter maris).